Here is a 177-residue protein sequence, read N- to C-terminus: UPF0114 protein HPAG1_0183 (177 aa).

The next 4 helical transmembrane spans lie at tryptophan 15–phenylalanine 35, leucine 54–valine 74, phenylalanine 102–leucine 122, and proline 145–valine 165.

The protein belongs to the UPF0114 family.

It is found in the cell membrane. The polypeptide is UPF0114 protein HPAG1_0183 (Helicobacter pylori (strain HPAG1)).